Consider the following 271-residue polypeptide: MVVAKKSLGQHFLTDESFLDRIVDALPPLNPLKLIEIGVGLGDLTLKLLDHYPLKTYEIDSSLCEKMRSKLKAQKKPFALELVEKDALFLKEEEPYFLISNLPYYIATRLVLNALKDPKCRGLLVMAQKEVALKFCAKDSQNALSVLTQAIGNATLLFDVPPSAFSPPPKVFSSVFEVIKEPLKEKALASLLQAPFFEEALQKGFETLEDFLKACFSSPRKTLSNNLKKSVSYREKLDKVLDFLALENQPTSVRASEIKDYLKLLEYLLKG.

The S-adenosyl-L-methionine site is built by His-11, Leu-13, Gly-38, Glu-58, Asp-86, and Asn-101.

The protein belongs to the class I-like SAM-binding methyltransferase superfamily. rRNA adenine N(6)-methyltransferase family. RsmA subfamily.

Its subcellular location is the cytoplasm. The enzyme catalyses adenosine(1518)/adenosine(1519) in 16S rRNA + 4 S-adenosyl-L-methionine = N(6)-dimethyladenosine(1518)/N(6)-dimethyladenosine(1519) in 16S rRNA + 4 S-adenosyl-L-homocysteine + 4 H(+). Functionally, specifically dimethylates two adjacent adenosines (A1518 and A1519) in the loop of a conserved hairpin near the 3'-end of 16S rRNA in the 30S particle. May play a critical role in biogenesis of 30S subunits. This Helicobacter pylori (strain Shi470) protein is Ribosomal RNA small subunit methyltransferase A.